Here is a 253-residue protein sequence, read N- to C-terminus: 5'/3'-nucleotidase SurE (253 aa).

D8, D9, S39, and N92 together coordinate a divalent metal cation.

It belongs to the SurE nucleotidase family. A divalent metal cation is required as a cofactor.

It localises to the cytoplasm. It catalyses the reaction a ribonucleoside 5'-phosphate + H2O = a ribonucleoside + phosphate. It carries out the reaction a ribonucleoside 3'-phosphate + H2O = a ribonucleoside + phosphate. The enzyme catalyses [phosphate](n) + H2O = [phosphate](n-1) + phosphate + H(+). Its function is as follows. Nucleotidase with a broad substrate specificity as it can dephosphorylate various ribo- and deoxyribonucleoside 5'-monophosphates and ribonucleoside 3'-monophosphates with highest affinity to 3'-AMP. Also hydrolyzes polyphosphate (exopolyphosphatase activity) with the preference for short-chain-length substrates (P20-25). Might be involved in the regulation of dNTP and NTP pools, and in the turnover of 3'-mononucleotides produced by numerous intracellular RNases (T1, T2, and F) during the degradation of various RNAs. The protein is 5'/3'-nucleotidase SurE of Escherichia coli O7:K1 (strain IAI39 / ExPEC).